Consider the following 86-residue polypeptide: Cytochrome c-555 (86 aa).

Heme c is bound by residues cysteine 14, cysteine 17, histidine 18, and methionine 60.

In terms of processing, binds 1 heme c group covalently per subunit.

This basic c-type monoheme cytochrome has been found exclusively in the green photosynthetic bacteria, although its role in bacterial photosynthesis is not established. It has an unusually low redox potential compared with mitochondrial cytochrome c. It is reactive with cytochrome c oxidases but not with reductases. The protein is Cytochrome c-555 of Chlorobaculum thiosulfatiphilum (Chlorobium limicola f.sp. thiosulfatophilum).